A 482-amino-acid polypeptide reads, in one-letter code: MGQFISFMQEIPIFLQEALNIALVAVSLICIVKGLVNLYRCGLFQLMVFLVLAGRSCSEETFKIGMHTQFQEVSLSLSALLTNQSHELPMLCLANKTHLYLKSGRSSFKINIDSVTVLTRSADVFVHSPKLGSCFESDEEWVVAWWIEAIGHRWDQDPGLLCRNKTKTEGKLIQINISRADGNVHYGWRLKNGLDHIYRGREEPCFEGKQCLIKIQPEDWPTDCKADHTNTFRFLSRSQKSIAVGRTLKAFFSWSLTDPLGNEAPGGYCLEKWMLVASELKCFGTLQCQVQPKSRLRVCDMLRLFDYNKNAIKTLNEETKTRVNVLSHTINALISDNLLMKNKIRELMSVPYCNYTRFWYVNHTLSGQHSLPRCWMIRNNSYLNSSEFRNEWILESDFLISEMLSKEYSERQGRTPITLVDICFWSTEFFISTLFLHLIGFPTHEHIRGEGCPLPHRLNSMGGCRCGKYLPLKKPTIWHRRH.

Glycine 2 is lipidated: N-myristoyl glycine; by host. Topologically, residues 2–17 are extracellular; sequence GQFISFMQEIPIFLQE. A helical membrane pass occupies residues 18–32; it reads ALNIALVAVSLICIV. Lysine 33 is a topological domain (cytoplasmic). Residues 34-53 form a helical membrane-spanning segment; the sequence is GLVNLYRCGLFQLMVFLVLA. 2 consecutive stretches face the extracellular side: residues 54 to 58 and 59 to 421; these read GRSCS and EETF…TLVD. Cysteine 57 provides a ligand contact to Zn(2+). Residues asparagine 83 and asparagine 95 are each glycosylated (N-linked (GlcNAc...) asparagine; by host). 5 disulfide bridges follow: cysteine 92–cysteine 224, cysteine 134–cysteine 162, cysteine 205–cysteine 211, cysteine 269–cysteine 282, and cysteine 353–cysteine 374. Residues asparagine 164 and asparagine 176 are each glycosylated (N-linked (GlcNAc...) asparagine; by host). N-linked (GlcNAc...) asparagine; by host glycans are attached at residues asparagine 354, asparagine 362, asparagine 379, and asparagine 384. Residues 422 to 442 traverse the membrane as a helical segment; it reads ICFWSTEFFISTLFLHLIGFP. Topologically, residues 443–482 are cytoplasmic; it reads THEHIRGEGCPLPHRLNSMGGCRCGKYLPLKKPTIWHRRH. The Zn(2+) site is built by histidine 444, histidine 446, cysteine 452, histidine 456, cysteine 464, cysteine 466, and histidine 482.

It belongs to the arenaviridae GPC protein family. In terms of assembly, homotetramer; disulfide-linked. As to quaternary structure, homotetramer. GP2 homotetramers bind through ionic interactions with GP1 homotetramers to form the GP complex together with the stable signal peptide. The GP-C polyprotein interacts with the host protease MBTPS1/SKI-1 resulting in the polyprotein processing. In terms of processing, specific enzymatic cleavages in vivo yield mature proteins. GP-C polyprotein is cleaved in the endoplasmic reticulum by the host protease MBTPS1. Only cleaved glycoprotein is incorporated into virions. The SSP remains stably associated with the GP complex following cleavage by signal peptidase and plays crucial roles in the trafficking of GP through the secretory pathway. Post-translationally, myristoylation is necessary for GP2-mediated fusion activity.

The protein resides in the virion membrane. It is found in the host endoplasmic reticulum membrane. The protein localises to the host Golgi apparatus membrane. It localises to the host cell membrane. Class I viral fusion protein that directs fusion of viral and host endosomal membranes, leading to delivery of the nucleocapsid into the cytoplasm. Membrane fusion is mediated by irreversible conformational changes induced upon acidification in the endosome. Functionally, stable signal peptide (SSP): cleaved and functions as a signal peptide. In addition, it is also retained as the third component of the GP complex. The SSP is required for efficient glycoprotein expression, post-translational maturation cleavage of GP1 and GP2, glycoprotein transport to the cell surface plasma membrane, formation of infectious virus particles, and acid pH-dependent glycoprotein-mediated cell fusion. Its function is as follows. Interacts with the host receptor. This chain is Pre-glycoprotein polyprotein GP complex, found in Artibeus (neotropical fruit bats).